The following is a 545-amino-acid chain: Phenylalanine--tRNA ligase beta subunit (545 aa).

In terms of domain architecture, B5 spans 268-343 (FLHKIQNVRE…MSIGYNNLEP (76 aa)). 4 residues coordinate Mg(2+): aspartate 321, aspartate 327, glutamate 330, and aspartate 331.

This sequence belongs to the phenylalanyl-tRNA synthetase beta subunit family. Type 2 subfamily. Tetramer of two alpha and two beta subunits. It depends on Mg(2+) as a cofactor.

It localises to the cytoplasm. The catalysed reaction is tRNA(Phe) + L-phenylalanine + ATP = L-phenylalanyl-tRNA(Phe) + AMP + diphosphate + H(+). This is Phenylalanine--tRNA ligase beta subunit from Saccharolobus islandicus (strain M.16.27) (Sulfolobus islandicus).